The sequence spans 178 residues: Putative metal-dependent hydrolase GTNG_0529 (178 aa).

The Zn(2+) site is built by His-68, His-161, and His-165.

The protein belongs to the metal hydrolase YfiT family. As to quaternary structure, homodimer. It depends on Zn(2+) as a cofactor.

Its subcellular location is the cytoplasm. Functionally, possible metal-dependent hydrolase. This Geobacillus thermodenitrificans (strain NG80-2) protein is Putative metal-dependent hydrolase GTNG_0529.